The primary structure comprises 65 residues: MSGSIKVTLAKSMIGRPEKHRKVLRAMGLTKVNRTVCLQDTPTVQGMIRKVSHLLRVEESADGSE.

This sequence belongs to the universal ribosomal protein uL30 family. As to quaternary structure, part of the 50S ribosomal subunit.

The sequence is that of Large ribosomal subunit protein uL30 from Desulfosudis oleivorans (strain DSM 6200 / JCM 39069 / Hxd3) (Desulfococcus oleovorans).